A 270-amino-acid polypeptide reads, in one-letter code: Putative phosphoenolpyruvate synthase regulatory protein (270 aa).

ADP is bound at residue 149–156 (GVSRSGKT).

It belongs to the pyruvate, phosphate/water dikinase regulatory protein family. PSRP subfamily.

The catalysed reaction is [pyruvate, water dikinase] + ADP = [pyruvate, water dikinase]-phosphate + AMP + H(+). It carries out the reaction [pyruvate, water dikinase]-phosphate + phosphate + H(+) = [pyruvate, water dikinase] + diphosphate. In terms of biological role, bifunctional serine/threonine kinase and phosphorylase involved in the regulation of the phosphoenolpyruvate synthase (PEPS) by catalyzing its phosphorylation/dephosphorylation. In Alteromonas mediterranea (strain DSM 17117 / CIP 110805 / LMG 28347 / Deep ecotype), this protein is Putative phosphoenolpyruvate synthase regulatory protein.